A 1187-amino-acid polypeptide reads, in one-letter code: DNA excision repair protein CSB (1187 aa).

Polar residues predominate over residues Q31–T43. Disordered regions lie at residues Q31–A53, I75–A102, K217–S242, and D265–D351. Basic and acidic residues-rich tracts occupy residues K92 to G101 and K217 to D230. Positions K300–N319 are enriched in basic residues. A compositionally biased stretch (acidic residues) spans S339–D351. The Helicase ATP-binding domain occupies W384–G580. An ATP-binding site is contributed by D397 to T404. The disordered stretch occupies residues S457–E480. A compositionally biased stretch (acidic residues) spans S468 to E480. The DEGH box motif lies at D531 to H534. Residues K716 to K876 enclose the Helicase C-terminal domain. 2 disordered regions span residues L916–D945 and G1095–R1116. The span at A918 to S933 shows a compositional bias: low complexity.

The protein belongs to the SNF2/RAD54 helicase family. Homodimer. Binds DNA. As to expression, expressed in proliferating tissues. Highly expressed in shoot apical meristem (SAM). Expressed in roots, young leaves, flag leaves, and panicles. Expressed at very low levels in mature leaves.

The protein resides in the nucleus. Its function is as follows. Essential factor involved in transcription-coupled nucleotide excision repair (TCR) which allows RNA polymerase II-blocking lesions to be rapidly removed from the transcribed strand of active genes. Upon DNA-binding, it locally modifies DNA conformation by wrapping the DNA around itself, thereby modifying the interface between stalled RNA polymerase II and DNA. It is required for transcription-coupled repair complex formation. The chain is DNA excision repair protein CSB from Oryza sativa subsp. japonica (Rice).